We begin with the raw amino-acid sequence, 147 residues long: Prefoldin subunit alpha (147 aa).

It belongs to the prefoldin alpha subunit family. Heterohexamer of two alpha and four beta subunits.

Its subcellular location is the cytoplasm. In terms of biological role, molecular chaperone capable of stabilizing a range of proteins. Seems to fulfill an ATP-independent, HSP70-like function in archaeal de novo protein folding. This is Prefoldin subunit alpha from Methanocorpusculum labreanum (strain ATCC 43576 / DSM 4855 / Z).